A 113-amino-acid polypeptide reads, in one-letter code: U11-theraphotoxin-Hhn1h (113 aa).

The signal sequence occupies residues M1–A21. A propeptide spanning residues D22–R74 is cleaved from the precursor. Residues E61–D83 form a disordered region. 2 cysteine pairs are disulfide-bonded: C82–C95 and C89–C110.

It belongs to the neurotoxin 14 (magi-1) family. 01 (HNTX-16) subfamily. In terms of tissue distribution, expressed by the venom gland.

It localises to the secreted. Probable ion channel inhibitor. This chain is U11-theraphotoxin-Hhn1h, found in Cyriopagopus hainanus (Chinese bird spider).